The sequence spans 92 residues: Putative septation protein SpoVG (92 aa).

This sequence belongs to the SpoVG family.

Functionally, could be involved in septation. This chain is Putative septation protein SpoVG, found in Clostridioides difficile (strain 630) (Peptoclostridium difficile).